We begin with the raw amino-acid sequence, 215 residues long: Orotate phosphoribosyltransferase (215 aa).

A 5-phospho-alpha-D-ribose 1-diphosphate-binding site is contributed by Lys26. 34–35 (FF) contacts orotate. 5-phospho-alpha-D-ribose 1-diphosphate is bound by residues 72–73 (YK), Arg99, Lys100, Lys103, His105, and 124–132 (DDVITAGTA). Positions 128 and 156 each coordinate orotate.

The protein belongs to the purine/pyrimidine phosphoribosyltransferase family. PyrE subfamily. In terms of assembly, homodimer. It depends on Mg(2+) as a cofactor.

The enzyme catalyses orotidine 5'-phosphate + diphosphate = orotate + 5-phospho-alpha-D-ribose 1-diphosphate. It participates in pyrimidine metabolism; UMP biosynthesis via de novo pathway; UMP from orotate: step 1/2. Functionally, catalyzes the transfer of a ribosyl phosphate group from 5-phosphoribose 1-diphosphate to orotate, leading to the formation of orotidine monophosphate (OMP). The sequence is that of Orotate phosphoribosyltransferase from Cellvibrio japonicus (strain Ueda107) (Pseudomonas fluorescens subsp. cellulosa).